Reading from the N-terminus, the 378-residue chain is Beta sliding clamp (378 aa).

It belongs to the beta sliding clamp family. In terms of assembly, forms a ring-shaped head-to-tail homodimer around DNA which binds and tethers DNA polymerases and other proteins to the DNA. The DNA replisome complex has a single clamp-loading complex (3 tau and 1 each of delta, delta', psi and chi subunits) which binds 3 Pol III cores (1 core on the leading strand and 2 on the lagging strand) each with a beta sliding clamp dimer. Additional proteins in the replisome are other copies of gamma, psi and chi, Ssb, DNA helicase and RNA primase. Interacts with YabA, and via YabA, with DnaA. During sporulation probably interacts with SirA.

It localises to the cytoplasm. It is found in the nucleoid. Functionally, confers DNA tethering and processivity to DNA polymerases and other proteins. Acts as a clamp, forming a ring around DNA (a reaction catalyzed by the clamp-loading complex) which diffuses in an ATP-independent manner freely and bidirectionally along dsDNA. Initially characterized for its ability to contact the catalytic subunit of DNA polymerase III (Pol III), a complex, multichain enzyme responsible for most of the replicative synthesis in bacteria; Pol III exhibits 3'-5' exonuclease proofreading activity. The beta chain is required for initiation of replication as well as for processivity of DNA replication. Overexpression in vivo stimulates inititation of DNA replication from oriC. Increased levels of DnaN remove YabA from its association with DnaA on the chromosome, allowing DnaA to bind to its targets. Its interaction with DnaA probably serves as a sink to prevent excessive replication initiation. This is Beta sliding clamp from Bacillus subtilis (strain 168).